Consider the following 139-residue polypeptide: Peptide methionine sulfoxide reductase MsrB (139 aa).

The 123-residue stretch at 9 to 131 folds into the MsrB domain; the sequence is TPSDNTELTE…NSASLSFIDD (123 aa). Positions 48, 51, 97, and 100 each coordinate Zn(2+). Cys120 serves as the catalytic Nucleophile.

This sequence belongs to the MsrB Met sulfoxide reductase family. Requires Zn(2+) as cofactor.

It catalyses the reaction L-methionyl-[protein] + [thioredoxin]-disulfide + H2O = L-methionyl-(R)-S-oxide-[protein] + [thioredoxin]-dithiol. The polypeptide is Peptide methionine sulfoxide reductase MsrB (Pectobacterium carotovorum subsp. carotovorum (strain PC1)).